The following is a 516-amino-acid chain: Apolipoprotein N-acyltransferase (516 aa).

Transmembrane regions (helical) follow at residues 24–44, 58–78, 90–110, 125–145, 163–183, and 192–212; these read LAQA…LLYL, GWCY…ISIH, LLTL…AWLW, LAFA…LTGF, APLG…ALLV, and PPAL…GLAL. The CN hydrolase domain occupies 230–471; that stretch reads VQGNVEQNLK…RAVLYGEVTP (242 aa). Catalysis depends on E270, which acts as the Proton acceptor. K331 is an active-site residue. The Nucleophile role is filled by C383. The chain crosses the membrane as a helical span at residues 479–499; that stretch reads LRWRAWPLAGLAVLLLGWALL.

The protein belongs to the CN hydrolase family. Apolipoprotein N-acyltransferase subfamily.

The protein resides in the cell inner membrane. The enzyme catalyses N-terminal S-1,2-diacyl-sn-glyceryl-L-cysteinyl-[lipoprotein] + a glycerophospholipid = N-acyl-S-1,2-diacyl-sn-glyceryl-L-cysteinyl-[lipoprotein] + a 2-acyl-sn-glycero-3-phospholipid + H(+). The protein operates within protein modification; lipoprotein biosynthesis (N-acyl transfer). Catalyzes the phospholipid dependent N-acylation of the N-terminal cysteine of apolipoprotein, the last step in lipoprotein maturation. The chain is Apolipoprotein N-acyltransferase from Azotobacter vinelandii (strain DJ / ATCC BAA-1303).